Consider the following 535-residue polypeptide: Zinc transporter ZIP5 (535 aa).

The signal sequence occupies residues 1–19 (MGPPVHHLLTGLCVGVALG). Over 20–210 (WVGGSVPNLG…PAPPGDVLSA (191 aa)) the chain is Extracellular. Residues asparagine 49 and asparagine 158 are each glycosylated (N-linked (GlcNAc...) asparagine). A helical transmembrane segment spans residues 211-231 (LLHSGLAVLFLSLPAPLSLLL). Topologically, residues 232-242 (LRLLGPRLLRP) are cytoplasmic. Residues 243-263 (VLGFLGALAVGTLCGDALLHL) traverse the membrane as a helical segment. Residues 264 to 285 (LPHAQGGRHTGPSEQSEEDLGP) lie on the Extracellular side of the membrane. A helical membrane pass occupies residues 286 to 306 (GLSVLGGLFLLFMLENTLGLV). The Cytoplasmic portion of the chain corresponds to 307-439 (RHRGLRPRCC…LLQEGLSFRK (133 aa)). Residues 316 to 373 (CRNKRDLGEPNPDPEDGSGMVLRPLQAASEPEVQGQRENRQSSPSLAPPGHQGHSHEH) form a disordered region. Serine 333 is subject to Phosphoserine. Histidine 371 is modified (pros-methylhistidine). The chain crosses the membrane as a helical span at residues 440–460 (LLLLSLVSGALGLGGAALGVG). Residues 461–465 (LSLGP) are Extracellular-facing. Residues 466-486 (VPLTPWVFGTTAGVFLYVALV) form a helical membrane-spanning segment. The Cytoplasmic segment spans residues 487–503 (DMLPTLLRPPEPLPVFH). The chain crosses the membrane as a helical span at residues 504 to 524 (VLLQGLGLLLGGSLMFTIALL). At 525-535 (EEQLVPTVPDG) the chain is on the extracellular side.

Belongs to the ZIP transporter (TC 2.A.5) family. As to quaternary structure, homodimer. In terms of processing, N-Glycosylated. Post-translationally, methylated at His-371 by METTL9. Expressed in all stages of eye development and primarily in the sclera and several layers of the retina, including the inner segment, outer plexiform layer and ganglion cell layer. Expressed in pancreas, kidney and the proximal and distal small intestine as well as in the embryonic visceral yolk sac. In the proximal intestine, expression is predominant in the crypts but diminishes toward the apical regions of the villi.

The protein resides in the basolateral cell membrane. It catalyses the reaction Zn(2+)(in) = Zn(2+)(out). Its function is as follows. Uniporter that transports zinc(2+) into polarized cells of enterocytes, pancreatic acinar and endoderm cells across the basolateral membrane and participates, notably, in zinc excretion from the intestine by the uptake of zinc from the blood into the intestine. The transport mechanism is temperature- and concentration-dependent and saturable. In addition, is also a high affinity copper transporter in vitro. Also may regulate glucose-stimulated insulin secretion (GSIS) in islets primarily through the zinc-activated SIRT1-PPARGC1A axis. Could regulate the BMP/TGF-beta (bone morphogenetic protein/transforming growth factor-beta) signaling pathway and modulates extracellular matrix (ECM) proteins of the sclera. Plays a role in eye development. The chain is Zinc transporter ZIP5 from Mus musculus (Mouse).